The sequence spans 865 residues: Chitin synthase 3 (865 aa).

A disordered region spans residues 1–59 (MASQYPGHQLDDIPSTNVYRPPPRHEDDEAEHALLHQNSAYQSQYDDPHSRPLTPGQES). Residues 23 to 34 (PRHEDDEAEHAL) are compositionally biased toward basic and acidic residues. The span at 36-45 (HQNSAYQSQY) shows a compositional bias: polar residues. 3 N-linked (GlcNAc...) asparagine glycosylation sites follow: Asn64, Asn95, and Asn538. 3 consecutive transmembrane segments (helical) span residues 565 to 585 (FFLH…WFSL), 620 to 640 (IINT…FILA), and 650 to 670 (VAYI…IVLS). Asn682 carries N-linked (GlcNAc...) asparagine glycosylation. Transmembrane regions (helical) follow at residues 707–727 (IVII…FLYM), 735–755 (SFAQ…IYAF), and 837–857 (LVAT…SDSL).

It belongs to the chitin synthase family. Class III subfamily.

It is found in the cell membrane. It carries out the reaction [(1-&gt;4)-N-acetyl-beta-D-glucosaminyl](n) + UDP-N-acetyl-alpha-D-glucosamine = [(1-&gt;4)-N-acetyl-beta-D-glucosaminyl](n+1) + UDP + H(+). Polymerizes chitin, a structural polymer of the cell wall and septum, by transferring the sugar moiety of UDP-GlcNAc to the non-reducing end of the growing chitin polymer. Is not only stable at different pH, but is also able to tolerate a broad temperature range. With CHS2, plays an important role in virulence. In Exophiala dermatitidis (strain ATCC 34100 / CBS 525.76 / NIH/UT8656) (Black yeast), this protein is Chitin synthase 3.